A 928-amino-acid chain; its full sequence is MYCBP-associated protein (928 aa).

Disordered regions lie at residues 1-38 (MKKANDRQSPPKLLEKKRAKAPEQPTPPIQEEPEPVSN) and 164-183 (EEPKPKSPKEEKRPPWAPPL). The span at 164–177 (EEPKPKSPKEEKRP) shows a compositional bias: basic and acidic residues. Position 557 is a phosphoserine (serine 557). Threonine 558 carries the post-translational modification Phosphothreonine. Position 564 is a phosphoserine (serine 564). Positions 786-881 (IPDEGQKSPP…SSATSQEPID (96 aa)) are disordered. Residues 806 to 865 (LGKEDRRGGAQEKKQLSARDKEEKKGSKTPSKEDRLNSKKQKAKDDKKVVKSTSRDRLLS) are compositionally biased toward basic and acidic residues.

Interacts with MYCBP. Expressed in brain, retina, testis, heart and lung. Not detected in liver, kidney or intestine. In brain, highly abundant in CNS neurons of the hippocampus and cerebellum. Strongly expressed in cochlea and vestibular sensory epithelia. In both the organ of Corti and the vestibular organ, expression is restricted to hair cells.

The protein resides in the cytoplasm. It localises to the membrane. Functionally, may play a role in spermatogenesis. May be involved in synaptic processes. In Rattus norvegicus (Rat), this protein is MYCBP-associated protein.